We begin with the raw amino-acid sequence, 488 residues long: Glutamate--tRNA ligase (488 aa).

Positions Pro-11–Asn-21 match the 'HIGH' region motif. Cys-108, Cys-110, Cys-135, and Asp-137 together coordinate Zn(2+). The short motif at Lys-252–Arg-256 is the 'KMSKS' region element. Residue Lys-255 coordinates ATP.

This sequence belongs to the class-I aminoacyl-tRNA synthetase family. Glutamate--tRNA ligase type 1 subfamily. In terms of assembly, monomer. It depends on Zn(2+) as a cofactor.

The protein localises to the cytoplasm. It carries out the reaction tRNA(Glu) + L-glutamate + ATP = L-glutamyl-tRNA(Glu) + AMP + diphosphate. Its function is as follows. Catalyzes the attachment of glutamate to tRNA(Glu) in a two-step reaction: glutamate is first activated by ATP to form Glu-AMP and then transferred to the acceptor end of tRNA(Glu). This is Glutamate--tRNA ligase from Natranaerobius thermophilus (strain ATCC BAA-1301 / DSM 18059 / JW/NM-WN-LF).